Reading from the N-terminus, the 100-residue chain is Ferredoxin-2 (100 aa).

A 2Fe-2S ferredoxin-type domain is found at 4–97; that stretch reads YKVTLINEEE…DCTIMTHQES (94 aa). 4 residues coordinate [2Fe-2S] cluster: Cys42, Cys47, Cys50, and Cys81.

It belongs to the 2Fe2S plant-type ferredoxin family. The cofactor is [2Fe-2S] cluster.

In terms of biological role, ferredoxins are iron-sulfur proteins that transfer electrons in a wide variety of metabolic reactions. The chain is Ferredoxin-2 from Aphanothece sacrum.